Here is a 146-residue protein sequence, read N- to C-terminus: SGKYISWEDSCSYLQLQKYERCELAKALKKGGLADFKGYSLENWICTAFHESGYNTASTNYNPPDKSTDYGIFQINSRWWCNDYKTPRSKNTCNIDCKVLLGDDISPAIKCAKRVVSDPNGMGAWVAWKKYCKGKNLSQWTQGCKL.

The N-terminal stretch at Ser-1–Leu-16 is a signal peptide. The region spanning Gln-17–Leu-146 is the C-type lysozyme domain. 4 disulfide bridges follow: Cys-22–Cys-144, Cys-46–Cys-132, Cys-81–Cys-97, and Cys-93–Cys-111. Residues Glu-51 and Asp-69 contribute to the active site.

It belongs to the glycosyl hydrolase 22 family. Expressed by the skin glands.

It localises to the secreted. It carries out the reaction Hydrolysis of (1-&gt;4)-beta-linkages between N-acetylmuramic acid and N-acetyl-D-glucosamine residues in a peptidoglycan and between N-acetyl-D-glucosamine residues in chitodextrins.. In terms of biological role, lysozymes have primarily a bacteriolytic function; those in tissues and body fluids are associated with the monocyte-macrophage system and enhance the activity of immunoagents. Has antibacterial activity against the Gram-positive bacterium S.aureus and against the Gram-negative bacterium E.coli with a MIC of 1 uM and 8 uM respectively. No antifungal activity against C.albicans. This Bufo gargarizans andrewsi (Andrew's toad) protein is Lysozyme C.